A 263-amino-acid polypeptide reads, in one-letter code: Small ribosomal subunit protein eS4 (263 aa).

Positions 42-104 (LPLIIFLRNR…TGEHFRLVYD (63 aa)) constitute an S4 RNA-binding domain.

This sequence belongs to the eukaryotic ribosomal protein eS4 family. As to quaternary structure, component of the small ribosomal subunit.

It localises to the cytoplasm. In terms of biological role, component of the small ribosomal subunit. The ribosome is a large ribonucleoprotein complex responsible for the synthesis of proteins in the cell. The protein is Small ribosomal subunit protein eS4 (rps4) of Xenopus tropicalis (Western clawed frog).